A 188-amino-acid chain; its full sequence is Peptide deformylase (188 aa).

Residues cysteine 94 and histidine 136 each contribute to the Fe cation site. The active site involves glutamate 137. Histidine 140 serves as a coordination point for Fe cation.

This sequence belongs to the polypeptide deformylase family. Requires Fe(2+) as cofactor.

It catalyses the reaction N-terminal N-formyl-L-methionyl-[peptide] + H2O = N-terminal L-methionyl-[peptide] + formate. Removes the formyl group from the N-terminal Met of newly synthesized proteins. Requires at least a dipeptide for an efficient rate of reaction. N-terminal L-methionine is a prerequisite for activity but the enzyme has broad specificity at other positions. The polypeptide is Peptide deformylase (Pelodictyon phaeoclathratiforme (strain DSM 5477 / BU-1)).